Here is a 214-residue protein sequence, read N- to C-terminus: Outer-membrane lipoprotein LolB (214 aa).

An N-terminal signal peptide occupies residues 1–25 (MNNLKRLTKTIFSCFTLSALLLLAG). Cysteine 26 is lipidated: N-palmitoyl cysteine. The S-diacylglycerol cysteine moiety is linked to residue cysteine 26.

It belongs to the LolB family. As to quaternary structure, monomer.

The protein localises to the cell outer membrane. Functionally, plays a critical role in the incorporation of lipoproteins in the outer membrane after they are released by the LolA protein. The polypeptide is Outer-membrane lipoprotein LolB (Shewanella baltica (strain OS155 / ATCC BAA-1091)).